The sequence spans 245 residues: 14-3-3 protein zeta (245 aa).

It belongs to the 14-3-3 family. In terms of assembly, homodimer.

It is found in the cytoplasm. Functionally, adapter protein implicated in the regulation of a large spectrum of both general and specialized signaling pathways. Binds to a large number of partners, usually by recognition of a phosphoserine or phosphothreonine motif. Binding generally results in the modulation of the activity of the binding partner. This is 14-3-3 protein zeta (ywhaz) from Xenopus tropicalis (Western clawed frog).